A 291-amino-acid polypeptide reads, in one-letter code: N-acetylmannosamine kinase (291 aa).

ATP-binding positions include 5-12 and 132-139; these read AIDIGGTK and GVGGGVVS. Zn(2+)-binding residues include His156, Cys166, Cys168, and Cys173.

Belongs to the ROK (NagC/XylR) family. NanK subfamily. Homodimer.

It catalyses the reaction an N-acyl-D-mannosamine + ATP = an N-acyl-D-mannosamine 6-phosphate + ADP + H(+). It participates in amino-sugar metabolism; N-acetylneuraminate degradation; D-fructose 6-phosphate from N-acetylneuraminate: step 2/5. In terms of biological role, catalyzes the phosphorylation of N-acetylmannosamine (ManNAc) to ManNAc-6-P. The chain is N-acetylmannosamine kinase from Escherichia coli O1:K1 / APEC.